Consider the following 647-residue polypeptide: tRNA 5-methylaminomethyl-2-thiouridine biosynthesis bifunctional protein MnmC (647 aa).

Positions 1–235 are tRNA (mnm(5)s(2)U34)-methyltransferase; sequence MSIPPFSQAS…KRDMLCGRFT (235 aa). The FAD-dependent cmnm(5)s(2)U34 oxidoreductase stretch occupies residues 250 to 647; that stretch reads IGGGIAGTAS…RGLACHPLRR (398 aa).

In the N-terminal section; belongs to the methyltransferase superfamily. tRNA (mnm(5)s(2)U34)-methyltransferase family. The protein in the C-terminal section; belongs to the DAO family. FAD serves as cofactor.

It is found in the cytoplasm. The enzyme catalyses 5-aminomethyl-2-thiouridine(34) in tRNA + S-adenosyl-L-methionine = 5-methylaminomethyl-2-thiouridine(34) in tRNA + S-adenosyl-L-homocysteine + H(+). Its function is as follows. Catalyzes the last two steps in the biosynthesis of 5-methylaminomethyl-2-thiouridine (mnm(5)s(2)U) at the wobble position (U34) in tRNA. Catalyzes the FAD-dependent demodification of cmnm(5)s(2)U34 to nm(5)s(2)U34, followed by the transfer of a methyl group from S-adenosyl-L-methionine to nm(5)s(2)U34, to form mnm(5)s(2)U34. The chain is tRNA 5-methylaminomethyl-2-thiouridine biosynthesis bifunctional protein MnmC from Methylobacillus flagellatus (strain ATCC 51484 / DSM 6875 / VKM B-1610 / KT).